A 1121-amino-acid polypeptide reads, in one-letter code: Anillin (1121 aa).

Methionine 1 bears the N-acetylmethionine mark. Residues 1-25 are compositionally biased toward basic and acidic residues; it reads MDPFTEKLLERTRARRENLQRKMAE. The required for ubiquitination stretch occupies residues 1 to 45; that stretch reads MDPFTEKLLERTRARRENLQRKMAERPTAVARSAPHAKRGREPLS. Disordered stretches follow at residues 1–113, 125–196, and 212–402; these read MDPF…AAIS, ADRG…PVGR, and DDVS…TKAI. The tract at residues 1-154 is interaction with CD2AP; sequence MDPFTEKLLE…MQRLAEQRRH (154 aa). The tract at residues 1–228 is nuclear localization; that stretch reads MDPFTEKLLE…AKQNSVQEQP (228 aa). 2 positions are modified to phosphoserine: serine 73 and serine 96. Positions 96–109 are enriched in pro residues; it reads SPMPAPRQAKPPAP. Polar residues predominate over residues 130–143; sequence NSGSEASATSSVKT. The span at 147 to 157 shows a compositional bias: basic and acidic residues; the sequence is RLAEQRRHWDS. Serine 180 carries the post-translational modification Phosphoserine. Threonine 192 carries the phosphothreonine modification. Residues 216-228 show a composition bias toward polar residues; sequence HSSAKQNSVQEQP. Residues serine 223, serine 250, and serine 259 each carry the phosphoserine modification. The segment at 229-671 is interaction with F-actin; it reads GTACLSKSSS…RDLLYSIDAY (443 aa). A compositionally biased stretch (low complexity) spans 234-250; the sequence is SKSSSASGASASINSSS. A compositionally biased stretch (low complexity) spans 282 to 298; the sequence is SASVSSSVKASSPVTAA. Positions 303 to 314 are enriched in basic and acidic residues; it reads ENREAQNPELLH. Phosphothreonine is present on threonine 316. Residues serine 318 and serine 334 each carry the phosphoserine modification. Residue threonine 359 is modified to Phosphothreonine. Lysine 366 is subject to N6-acetyllysine. Basic and acidic residues predominate over residues 368-384; that stretch reads FLERFGERCQEHSKESP. Residues 391-401 show a composition bias toward polar residues; it reads KTPNITPNTKA. A phosphothreonine mark is found at threonine 392 and threonine 396. Phosphoserine is present on residues serine 414 and serine 444. Residues 490–511 form a disordered region; that stretch reads NEPAVKLSSTEPAGSTESEMTK. Over residues 496–511 the composition is skewed to polar residues; it reads LSSTEPAGSTESEMTK. Phosphoserine is present on residues serine 513, serine 548, and serine 556. Residues 564–599 adopt a coiled-coil conformation; the sequence is FSDVLEEGELDVEKSQEEMDQVGAENSEEQEDALNI. Positions 623 to 635 are enriched in polar residues; the sequence is SPPSELRDSNLSA. The interval 623-656 is disordered; the sequence is SPPSELRDSNLSAASPKPGKFQRTRVPRAESADS. 4 positions are modified to phosphoserine: serine 637, serine 653, serine 656, and serine 659. Residue tyrosine 666 is modified to Phosphotyrosine. Phosphoserine is present on residues serine 673, serine 683, serine 787, and serine 924. The localization to the cleavage furrow stretch occupies residues 725–1121; it reads QQTVIYQASQ…DACYKPVGKP (397 aa). A PH domain is found at 980-1104; sequence AVEEKGFLTI…WMQKLNQVIV (125 aa).

As to quaternary structure, interacts with F-actin. Interacts with CD2AP. May interact with RHOA. Interacts with FZR1/CDH1 during mitotic exit. Post-translationally, phosphorylated during mitosis. In terms of processing, ubiquitinated, and this requires FZR1/CDH1.

It is found in the nucleus. Its subcellular location is the cytoplasm. The protein resides in the cytoskeleton. It localises to the cell cortex. The protein localises to the cell projection. It is found in the bleb. Required for cytokinesis. Essential for the structural integrity of the cleavage furrow and for completion of cleavage furrow ingression. Plays a role in bleb assembly during metaphase and anaphase of mitosis. May play a significant role in podocyte cell migration. The chain is Anillin (Anln) from Mus musculus (Mouse).